The following is an 828-amino-acid chain: Beta-galactosidase (828 aa).

The first 20 residues, 1-20, serve as a signal peptide directing secretion; the sequence is MKMKQFNLLSLFLILITSFG. Residues Asn23 and Asn153 are each glycosylated (N-linked (GlcNAc...) asparagine). Glu183 functions as the Proton donor in the catalytic mechanism. Catalysis depends on Glu252, which acts as the Nucleophile. N-linked (GlcNAc...) asparagine glycosylation is found at Asn253, Asn350, Asn379, Asn492, Asn667, Asn799, and Asn803. The 87-residue stretch at 742–828 folds into the SUEL-type lectin domain; it reads AHEHNKVELS…PKRLFVEVEC (87 aa).

This sequence belongs to the glycosyl hydrolase 35 family.

It is found in the secreted. Its subcellular location is the extracellular space. The protein localises to the apoplast. The enzyme catalyses Hydrolysis of terminal non-reducing beta-D-galactose residues in beta-D-galactosides.. This is Beta-galactosidase from Brassica oleracea (Wild cabbage).